The primary structure comprises 204 residues: Cytochrome c biogenesis ATP-binding export protein CcmA (204 aa).

The 203-residue stretch at 2 to 204 (IEVRDLGVSR…LDAEDLGGFL (203 aa)) folds into the ABC transporter domain. ATP is bound at residue 34–41 (GPNGIGKT).

The protein belongs to the ABC transporter superfamily. CcmA exporter (TC 3.A.1.107) family. In terms of assembly, the complex is composed of two ATP-binding proteins (CcmA) and two transmembrane proteins (CcmB).

Its subcellular location is the cell inner membrane. It catalyses the reaction heme b(in) + ATP + H2O = heme b(out) + ADP + phosphate + H(+). In terms of biological role, part of the ABC transporter complex CcmAB involved in the biogenesis of c-type cytochromes; once thought to export heme, this seems not to be the case, but its exact role is uncertain. Responsible for energy coupling to the transport system. The polypeptide is Cytochrome c biogenesis ATP-binding export protein CcmA (Ruegeria sp. (strain TM1040) (Silicibacter sp.)).